The sequence spans 353 residues: MRGTRVEIRLAALRNNALRAAELAGDAQVFAMVKANGYGHGLLLAAETMLDSVSGLGVAVLDEARTLREHGIALPILVAEGFFDAEELEAAARLSLEVVVHSLWQVELLLANPCPVRIWLKVNAGMNRLGLRPNEALSAAARLSQAGNAPVGVMSHFACADMDEDIHSEKQLLLAGSVAEQLQLPLSASNSAALLRYPRAHAQRVRPGIMLYGSSPFNWQTAAELGLQVSHRFSARLIAINAVEAGESVGYGATWTASDPRQIGVVAVGYGDGYPRHAPSGTPVAVNGVVTTLVGRVSMDMITIDVTGLSASVGDEVELWGDVVDVDDVARACGTISYELFCQITQRPERTIV.

Lysine 34 (proton acceptor; specific for D-alanine) is an active-site residue. An N6-(pyridoxal phosphate)lysine modification is found at lysine 34. Arginine 128 serves as a coordination point for substrate. The active-site Proton acceptor; specific for L-alanine is tyrosine 251. Residue methionine 299 participates in substrate binding.

This sequence belongs to the alanine racemase family. Pyridoxal 5'-phosphate serves as cofactor.

The enzyme catalyses L-alanine = D-alanine. It functions in the pathway amino-acid biosynthesis; D-alanine biosynthesis; D-alanine from L-alanine: step 1/1. In terms of biological role, catalyzes the interconversion of L-alanine and D-alanine. May also act on other amino acids. This chain is Alanine racemase (alr), found in Alcanivorax borkumensis (strain ATCC 700651 / DSM 11573 / NCIMB 13689 / SK2).